A 150-amino-acid polypeptide reads, in one-letter code: 1,4-dihydroxy-2-naphthoyl-CoA hydrolase (150 aa).

The active site involves Asp-19.

The protein belongs to the 4-hydroxybenzoyl-CoA thioesterase family. DHNA-CoA hydrolase subfamily.

The catalysed reaction is 1,4-dihydroxy-2-naphthoyl-CoA + H2O = 1,4-dihydroxy-2-naphthoate + CoA + H(+). The protein operates within cofactor biosynthesis; phylloquinone biosynthesis. It participates in quinol/quinone metabolism; 1,4-dihydroxy-2-naphthoate biosynthesis; 1,4-dihydroxy-2-naphthoate from chorismate: step 7/7. Catalyzes the hydrolysis of 1,4-dihydroxy-2-naphthoyl-CoA (DHNA-CoA) to 1,4-dihydroxy-2-naphthoate (DHNA), a reaction involved in phylloquinone (vitamin K1) biosynthesis. The chain is 1,4-dihydroxy-2-naphthoyl-CoA hydrolase from Prochlorococcus marinus (strain MIT 9515).